The primary structure comprises 571 residues: Glutamine--tRNA ligase (571 aa).

The 'HIGH' region signature appears at 35-45 (PEPNGYLHIGH). ATP contacts are provided by residues 36 to 38 (EPN) and 42 to 48 (HIGHAKS). L-glutamine contacts are provided by Asp-68 and Tyr-213. Residues Thr-232, 262–263 (RL), and 270–272 (LSK) contribute to the ATP site. The 'KMSKS' region signature appears at 269–273 (ILSKR).

It belongs to the class-I aminoacyl-tRNA synthetase family. As to quaternary structure, monomer.

The protein localises to the cytoplasm. It carries out the reaction tRNA(Gln) + L-glutamine + ATP = L-glutaminyl-tRNA(Gln) + AMP + diphosphate. This chain is Glutamine--tRNA ligase, found in Buchnera aphidicola subsp. Acyrthosiphon pisum (strain 5A).